The sequence spans 174 residues: RNA pyrophosphohydrolase (174 aa).

One can recognise a Nudix hydrolase domain in the interval 6-149 (GYRPNVGIIL…KRDVYLGALK (144 aa)). The Nudix box signature appears at 38 to 59 (GGIKPGESPETAMYRELYEEVG).

Belongs to the Nudix hydrolase family. RppH subfamily. It depends on a divalent metal cation as a cofactor.

Functionally, accelerates the degradation of transcripts by removing pyrophosphate from the 5'-end of triphosphorylated RNA, leading to a more labile monophosphorylated state that can stimulate subsequent ribonuclease cleavage. The sequence is that of RNA pyrophosphohydrolase from Neisseria meningitidis serogroup C (strain 053442).